The following is a 224-amino-acid chain: UPF0758 protein BLi02933/BL00636 (224 aa).

The MPN domain occupies 102–224 (VIRFPEDAAN…FVSLKEKGYL (123 aa)). Residues His-173, His-175, and Asp-186 each coordinate Zn(2+). A JAMM motif motif is present at residues 173 to 186 (HNHPSGDPAPSRED).

The protein belongs to the UPF0758 family.

The sequence is that of UPF0758 protein BLi02933/BL00636 from Bacillus licheniformis (strain ATCC 14580 / DSM 13 / JCM 2505 / CCUG 7422 / NBRC 12200 / NCIMB 9375 / NCTC 10341 / NRRL NRS-1264 / Gibson 46).